Consider the following 195-residue polypeptide: Xanthine phosphoribosyltransferase (195 aa).

The xanthine site is built by L20 and N27. 128 to 132 (ANGQA) contributes to the 5-phospho-alpha-D-ribose 1-diphosphate binding site. K156 contacts xanthine.

This sequence belongs to the purine/pyrimidine phosphoribosyltransferase family. Xpt subfamily. In terms of assembly, homodimer.

The protein resides in the cytoplasm. The enzyme catalyses XMP + diphosphate = xanthine + 5-phospho-alpha-D-ribose 1-diphosphate. It participates in purine metabolism; XMP biosynthesis via salvage pathway; XMP from xanthine: step 1/1. Its function is as follows. Converts the preformed base xanthine, a product of nucleic acid breakdown, to xanthosine 5'-monophosphate (XMP), so it can be reused for RNA or DNA synthesis. The sequence is that of Xanthine phosphoribosyltransferase from Limosilactobacillus fermentum (strain NBRC 3956 / LMG 18251) (Lactobacillus fermentum).